A 172-amino-acid chain; its full sequence is Adenine phosphoribosyltransferase (172 aa).

The protein belongs to the purine/pyrimidine phosphoribosyltransferase family. In terms of assembly, homodimer.

The protein localises to the cytoplasm. The enzyme catalyses AMP + diphosphate = 5-phospho-alpha-D-ribose 1-diphosphate + adenine. It functions in the pathway purine metabolism; AMP biosynthesis via salvage pathway; AMP from adenine: step 1/1. In terms of biological role, catalyzes a salvage reaction resulting in the formation of AMP, that is energically less costly than de novo synthesis. This chain is Adenine phosphoribosyltransferase, found in Clostridium botulinum (strain ATCC 19397 / Type A).